Reading from the N-terminus, the 204-residue chain is Dephospho-CoA kinase (204 aa).

The 198-residue stretch at 3–200 (VVAITGGIGS…ETYMAFASQQ (198 aa)) folds into the DPCK domain. 11–16 (GSGKTT) lines the ATP pocket.

This sequence belongs to the CoaE family.

It localises to the cytoplasm. It catalyses the reaction 3'-dephospho-CoA + ATP = ADP + CoA + H(+). The protein operates within cofactor biosynthesis; coenzyme A biosynthesis; CoA from (R)-pantothenate: step 5/5. In terms of biological role, catalyzes the phosphorylation of the 3'-hydroxyl group of dephosphocoenzyme A to form coenzyme A. This chain is Dephospho-CoA kinase, found in Aeromonas hydrophila.